The primary structure comprises 593 residues: Cryptochrome-2 (593 aa).

Residues 22 to 151 (ASSVHWFRKG…EVVTENSHTL (130 aa)) form the Photolyase/cryptochrome alpha/beta domain. A Glycyl lysine isopeptide (Lys-Gly) (interchain with G-Cter in ubiquitin) cross-link involves residue Lys-30. Phosphoserine is present on Ser-90. Glycyl lysine isopeptide (Lys-Gly) (interchain with G-Cter in ubiquitin) cross-links involve residues Lys-126 and Lys-242. The residue at position 266 (Ser-266) is a Phosphoserine; by MAPK. Ser-271 serves as a coordination point for FAD. Phosphoserine is present on Ser-299. FAD is bound at residue Gln-308. Lys-348 participates in a covalent cross-link: Glycyl lysine isopeptide (Lys-Gly) (interchain with G-Cter in ubiquitin). Residues His-374 and 406 to 408 (DAD) contribute to the FAD site. The tract at residues 390-489 (WVSWESGVRV…IIGVDYPRPI (100 aa)) is required for inhibition of CLOCK-BMAL1-mediated transcription. Glycyl lysine isopeptide (Lys-Gly) (interchain with G-Cter in ubiquitin) cross-links involve residues Lys-475 and Lys-504. The tract at residues 532-593 (PVAEPSSSQA…PTPELPSKDA (62 aa)) is disordered. Low complexity predominate over residues 537 to 548 (SSSQAGSMSSAG). Position 554 is a phosphoserine; by GSK3-beta (Ser-554). Ser-558 carries the post-translational modification Phosphoserine; by DYRK1A and MAPK.

Belongs to the DNA photolyase class-1 family. In terms of assembly, component of the circadian core oscillator, which includes the CRY proteins, CLOCK or NPAS2, BMAL1 or BMAL2, CSNK1D and/or CSNK1E, TIMELESS, and the PER proteins. Interacts with TIMELESS. Interacts directly with PER1, PER2 and PER3; interaction with PER2 inhibits its ubiquitination and vice versa. Interacts with CLOCK-BMAL1. Interacts with CLOCK. Interacts with BMAL1. Interacts with NFIL3. Interacts with FBXL3. Interacts with FBXL21. FBXL3, PER2 and the cofactor FAD compete for overlapping binding sites. FBXL3 cannot bind CRY2 that interacts already with PER2 or that contains bound FAD. Interacts with PPP5C (via TPR repeats); the interaction down-regulates the PPP5C phosphatase activity on CSNK1E. Interacts with nuclear receptors AR and NR3C1/GR; the interaction is ligand dependent. Interacts with PRKDC and CIART. Interacts with ISCA1 (in vitro). Interacts with DDB1, USP7 and TARDBP. Interacts with HNF4A. Interacts with PPARA. Interacts with PPARD (via domain NR LBD) and NR1I2 (via domain NR LBD) in a ligand-dependent manner. Interacts with PPARG, NR1I3 and VDR in a ligand-dependent manner. It depends on FAD as a cofactor. (6R)-5,10-methylene-5,6,7,8-tetrahydrofolate serves as cofactor. In terms of processing, phosphorylation on Ser-266 by MAPK is important for the inhibition of CLOCK-BMAL1-mediated transcriptional activity. Phosphorylation by CSKNE requires interaction with PER1 or PER2. Phosphorylated in a circadian manner at Ser-554 and Ser-558 in the suprachiasmatic nucleus (SCN) and liver. Phosphorylation at Ser-558 by DYRK1A promotes subsequent phosphorylation at Ser-554 by GSK3-beta: the two-step phosphorylation at the neighboring Ser residues leads to its proteasomal degradation. Post-translationally, ubiquitinated by the SCF(FBXL3) and SCF(FBXL21) complexes, regulating the balance between degradation and stabilization. The SCF(FBXL3) complex is mainly nuclear and mediates ubiquitination and subsequent degradation of CRY2. In contrast, cytoplasmic SCF(FBXL21) complex-mediated ubiquitination leads to stabilize CRY2 and counteract the activity of the SCF(FBXL3) complex. The SCF(FBXL3) and SCF(FBXL21) complexes probably mediate ubiquitination at different Lys residues. The SCF(FBXL3) complex recognizes and binds CRY2 phosphorylated at Ser-554 and Ser-558. Ubiquitination may be inhibited by PER2. Deubiquitinated by USP7. In terms of tissue distribution, expressed in all tissues examined including fetal brain, fibroblasts, heart, brain, placenta, lung, liver, skeletal muscle, kidney, pancreas, spleen, thymus, prostate, testis, ovary, small intestine, colon and leukocytes. Highest levels in heart and skeletal muscle.

It localises to the cytoplasm. The protein resides in the nucleus. Its activity is regulated as follows. KL001 (N-[3-(9H-carbazol-9-yl)-2-hydroxypropyl]-N-(2-furanylmethyl)-methanesulfonamide) binds to CRY1 and stabilizes it by inhibiting FBXL3- and ubiquitin-dependent degradation of CRY1 resulting in lengthening of the circadian periods. In terms of biological role, transcriptional repressor which forms a core component of the circadian clock. The circadian clock, an internal time-keeping system, regulates various physiological processes through the generation of approximately 24 hour circadian rhythms in gene expression, which are translated into rhythms in metabolism and behavior. It is derived from the Latin roots 'circa' (about) and 'diem' (day) and acts as an important regulator of a wide array of physiological functions including metabolism, sleep, body temperature, blood pressure, endocrine, immune, cardiovascular, and renal function. Consists of two major components: the central clock, residing in the suprachiasmatic nucleus (SCN) of the brain, and the peripheral clocks that are present in nearly every tissue and organ system. Both the central and peripheral clocks can be reset by environmental cues, also known as Zeitgebers (German for 'timegivers'). The predominant Zeitgeber for the central clock is light, which is sensed by retina and signals directly to the SCN. The central clock entrains the peripheral clocks through neuronal and hormonal signals, body temperature and feeding-related cues, aligning all clocks with the external light/dark cycle. Circadian rhythms allow an organism to achieve temporal homeostasis with its environment at the molecular level by regulating gene expression to create a peak of protein expression once every 24 hours to control when a particular physiological process is most active with respect to the solar day. Transcription and translation of core clock components (CLOCK, NPAS2, BMAL1, BMAL2, PER1, PER2, PER3, CRY1 and CRY2) plays a critical role in rhythm generation, whereas delays imposed by post-translational modifications (PTMs) are important for determining the period (tau) of the rhythms (tau refers to the period of a rhythm and is the length, in time, of one complete cycle). A diurnal rhythm is synchronized with the day/night cycle, while the ultradian and infradian rhythms have a period shorter and longer than 24 hours, respectively. Disruptions in the circadian rhythms contribute to the pathology of cardiovascular diseases, cancer, metabolic syndromes and aging. A transcription/translation feedback loop (TTFL) forms the core of the molecular circadian clock mechanism. Transcription factors, CLOCK or NPAS2 and BMAL1 or BMAL2, form the positive limb of the feedback loop, act in the form of a heterodimer and activate the transcription of core clock genes and clock-controlled genes (involved in key metabolic processes), harboring E-box elements (5'-CACGTG-3') within their promoters. The core clock genes: PER1/2/3 and CRY1/2 which are transcriptional repressors form the negative limb of the feedback loop and interact with the CLOCK|NPAS2-BMAL1|BMAL2 heterodimer inhibiting its activity and thereby negatively regulating their own expression. This heterodimer also activates nuclear receptors NR1D1/2 and RORA/B/G, which form a second feedback loop and which activate and repress BMAL1 transcription, respectively. CRY1 and CRY2 have redundant functions but also differential and selective contributions at least in defining the pace of the SCN circadian clock and its circadian transcriptional outputs. Less potent transcriptional repressor in cerebellum and liver than CRY1, though less effective in lengthening the period of the SCN oscillator. Seems to play a critical role in tuning SCN circadian period by opposing the action of CRY1. With CRY1, dispensable for circadian rhythm generation but necessary for the development of intercellular networks for rhythm synchrony. May mediate circadian regulation of cAMP signaling and gluconeogenesis by blocking glucagon-mediated increases in intracellular cAMP concentrations and in CREB1 phosphorylation. Besides its role in the maintenance of the circadian clock, is also involved in the regulation of other processes. Plays a key role in glucose and lipid metabolism modulation, in part, through the transcriptional regulation of genes involved in these pathways, such as LEP or ACSL4. Represses glucocorticoid receptor NR3C1/GR-induced transcriptional activity by binding to glucocorticoid response elements (GREs). Represses the CLOCK-BMAL1 induced transcription of BHLHE40/DEC1. Represses the CLOCK-BMAL1 induced transcription of NAMPT. Represses PPARD and its target genes in the skeletal muscle and limits exercise capacity. Represses the transcriptional activity of NR1I2. In Homo sapiens (Human), this protein is Cryptochrome-2 (CRY2).